A 264-amino-acid polypeptide reads, in one-letter code: 5'-nucleotidase SurE (264 aa).

The a divalent metal cation site is built by Asp10, Asp11, Ser43, and Asn99.

Belongs to the SurE nucleotidase family. It depends on a divalent metal cation as a cofactor.

The protein localises to the cytoplasm. It catalyses the reaction a ribonucleoside 5'-phosphate + H2O = a ribonucleoside + phosphate. Nucleotidase that shows phosphatase activity on nucleoside 5'-monophosphates. The chain is 5'-nucleotidase SurE from Methanococcus maripaludis (strain C7 / ATCC BAA-1331).